Reading from the N-terminus, the 360-residue chain is MKASLLNKLDVLSDRFEELTALLGDAEVISDQTRFRAYSREYAEVEPVVALYAQLLRVQGDLEGAQALLKDSDPDMREMAVEEVRETKQQLVELEAQLQRMLLPKDPNDGRNVFLEIRAGTGGDEAAIFSGDLFRMYSRYAERRGWRVEILSENEGEHGGYKEVIARVEGDSVYGKLKFESGAHRVQRVPETESQGRIHTSACTVAVLPEPDEQQAIEINPADLRVDTYRSSGAGGQHVNKTDSAIRITHLPSGIVVECQEERSQHKNRARAMSWLSAKLNDQQTSAAANAIASERKLLVGSGDRSERIRTYNFPQGRVTDHRVNLTLYSLDEVLAGGVDAVIEPLLAEYQADQLAALGE.

N5-methylglutamine is present on Q237.

The protein belongs to the prokaryotic/mitochondrial release factor family. In terms of processing, methylated by PrmC. Methylation increases the termination efficiency of RF1.

It is found in the cytoplasm. In terms of biological role, peptide chain release factor 1 directs the termination of translation in response to the peptide chain termination codons UAG and UAA. This Pseudomonas syringae pv. syringae (strain B728a) protein is Peptide chain release factor 1.